Reading from the N-terminus, the 478-residue chain is 9-divinyl ether synthase (478 aa).

A heme-binding site is contributed by Cys-431.

This sequence belongs to the cytochrome P450 family. 9-divinyl ether synthase subfamily.

It catalyses the reaction (9S)-hydroperoxy-(10E,12Z)-octadecadienoate = colneleate + H2O. In terms of biological role, involved in the biosynthesis of the anti-fungal toxins colneleic acid and colnelenic acid. The polypeptide is 9-divinyl ether synthase (DES) (Capsicum annuum (Capsicum pepper)).